The sequence spans 324 residues: Aldo-keto reductase family 1 member A1 (324 aa).

The residue at position 3 (S3) is a Phosphoserine. NADP(+) is bound by residues 10-19 (GQKMPLIGLG), T20, and W21. At S37 the chain carries Phosphoserine. D44 contacts NADP(+). The active-site Proton donor is Y49. K126 is modified (N6-acetyllysine; alternate). K126 carries the N6-succinyllysine; alternate modification. The residue at position 144 (K144) is an N6-succinyllysine. NADP(+) is bound by residues S161, N162, S210, L212, S214, S215, K262, S263, I264, T265, R268, Q271, and N272. A Phosphoserine modification is found at S210.

Belongs to the aldo/keto reductase family.

It is found in the cytoplasm. Its subcellular location is the cytosol. The protein localises to the apical cell membrane. It carries out the reaction a primary alcohol + NADP(+) = an aldehyde + NADPH + H(+). It catalyses the reaction L-gulonate + NADP(+) = aldehydo-D-glucuronate + NADPH + H(+). The catalysed reaction is L-gulono-1,4-lactone + NADP(+) = D-glucurono-3,6-lactone + NADPH + H(+). The enzyme catalyses allyl alcohol + NADP(+) = acrolein + NADPH + H(+). It carries out the reaction glycerol + NADP(+) = D-glyceraldehyde + NADPH + H(+). It catalyses the reaction glycerol + NADP(+) = L-glyceraldehyde + NADPH + H(+). The catalysed reaction is hydroxyacetone + NADP(+) = methylglyoxal + NADPH + H(+). The enzyme catalyses 3-deoxyfructose + NADP(+) = 3-deoxyglucosone + NADPH + H(+). It carries out the reaction (R)-mevalonate + NADP(+) = (R)-mevaldate + NADPH + H(+). It catalyses the reaction S-nitroso-CoA + NADPH + H(+) = sulfinamide-CoA + NADP(+). The catalysed reaction is S-nitrosoglutathione + NADPH + H(+) = S-(hydroxysulfenamide)glutathione + NADP(+). In terms of biological role, catalyzes the NADPH-dependent reduction of a wide variety of carbonyl-containing compounds to their corresponding alcohols. Displays enzymatic activity towards endogenous metabolites such as aromatic and aliphatic aldehydes, ketones, monosaccharides and bile acids, with a preference for negatively charged substrates, such as glucuronate and succinic semialdehyde. Plays an important role by catalyzing the reduction of D-glucuronic acid and D-glucurono-gamma-lactone. Functions as a detoxifiying enzyme by reducing a range of toxic aldehydes. Reduces methylglyoxal and 3-deoxyglucosone, which are present at elevated levels under hyperglycemic conditions and are cytotoxic. Involved also in the detoxification of lipid-derived aldehydes like acrolein. Plays a role in the activation of procarcinogens, such as polycyclic aromatic hydrocarbon trans-dihydrodiols, and in the metabolism of various xenobiotics and drugs. Also acts as an inhibitor of protein S-nitrosylation by mediating degradation of S-nitroso-coenzyme A (S-nitroso-CoA), a cofactor required to S-nitrosylate proteins. S-nitroso-CoA reductase activity is involved in reprogramming intermediary metabolism in renal proximal tubules, notably by inhibiting protein S-nitrosylation of isoform 2 of PKM (PKM2). Also acts as a S-nitroso-glutathione reductase by catalyzing the NADPH-dependent reduction of S-nitrosoglutathione. Displays no reductase activity towards retinoids. This is Aldo-keto reductase family 1 member A1 (AKR1A1) from Cricetulus griseus (Chinese hamster).